The following is an 896-amino-acid chain: DNA mismatch repair protein MutS (896 aa).

Residue 618–625 (GPNMSGKS) coordinates ATP. Residues 805-825 (GKESTKTGKGENKNISHKTES) show a composition bias toward basic and acidic residues. A disordered region spans residues 805–826 (GKESTKTGKGENKNISHKTESD).

This sequence belongs to the DNA mismatch repair MutS family.

Functionally, this protein is involved in the repair of mismatches in DNA. It is possible that it carries out the mismatch recognition step. This protein has a weak ATPase activity. This Halothermothrix orenii (strain H 168 / OCM 544 / DSM 9562) protein is DNA mismatch repair protein MutS.